The chain runs to 396 residues: Beta-peptidyl aminopeptidase BapA (396 aa).

The signal sequence occupies residues 1-21; that stretch reads MHYLKFPAIIAGMLLAGAASA. Ser271 (nucleophile) is an active-site residue. Catalysis depends on proton donor/acceptor residues Ser309 and Asp311.

This sequence belongs to the peptidase S58 family. Heterooctamer of 4 heterodimers ((alpha:beta)4); each heterodimer is composed of an alpha subunit and a beta subunit processed from the same precursor. In terms of processing, autoproteolytic processing to generate the alpha and beta subunit is required for self-activation and is proposed to use a similar mechanism as substrate cleavage.

It is found in the periplasm. It carries out the reaction Cleaves N-terminal beta-homoamino acids from peptides composed of 2 to 6 amino acids.. Its activity is regulated as follows. Inhibited by AEBSF (4-(2-aminoethyl)benzenesulfonyl fluoride, Pefabloc SC). Beta-aminopeptidase that can cleave synthetic beta-peptides which consist of backbone-elongated beta-amino acid residues that are not processed by common proteolytic enzymes. Can cleave the beta-peptides beta-homoVal-beta-homoAla-beta-homoLeu and beta-homoAla-beta-homoLeu. Requires a beta-amino acid at the N-terminus of peptide substrates and cleaves the peptide bond between the N-terminal beta-amino acid and the amino acid at the second position of tripeptidic substrates of the general structure H-betahXaa-Ile-betahTyr-OH according to the following preferences with regard to the side chain of the N-terminal beta-amino acid: aliphatic and aromatic &gt; OH-containing &gt; hydrogen, basic and polar. beta-homoVal-beta-homoAla-beta-homoLeu and beta-homoAla-beta-homoLeu. In Sphingosinicella microcystinivorans, this protein is Beta-peptidyl aminopeptidase BapA.